The sequence spans 282 residues: Putative lactoylglutathione lyase (282 aa).

N-acetylalanine is present on alanine 2. 2 VOC domains span residues 17–141 (RFLH…LIQR) and 147–274 (PLCQ…LVDN). Position 20 (histidine 20) interacts with Zn(2+). Arginine 24 is a binding site for substrate. Glutamate 71 serves as a coordination point for Zn(2+). Residues asparagine 75 and histidine 89 each contribute to the substrate site. The Zn(2+) site is built by histidine 89 and glutamate 137. Glutamate 137 serves as the catalytic Proton donor/acceptor. Residue 254–255 (LG) coordinates substrate.

It belongs to the glyoxalase I family. Requires Zn(2+) as cofactor.

The catalysed reaction is (R)-S-lactoylglutathione = methylglyoxal + glutathione. It functions in the pathway secondary metabolite metabolism; methylglyoxal degradation; (R)-lactate from methylglyoxal: step 1/2. Functionally, catalyzes the conversion of hemimercaptal, formed from methylglyoxal and glutathione, to S-lactoylglutathione. The protein is Putative lactoylglutathione lyase of Brassica oleracea var. gemmifera (Brussel sprouts).